The primary structure comprises 104 residues: Ig lambda-3 chain C region (104 aa).

The Ig-like domain occupies 6 to 99 (PTLTMFPPSP…EGDTVEKSLS (94 aa)). Cys27 and Cys85 are disulfide-bonded.

This is Ig lambda-3 chain C region (Iglc3) from Mus musculus (Mouse).